Consider the following 148-residue polypeptide: CDC25-like phosphatase YCH1 (148 aa).

Methionine 1 is subject to N-acetylmethionine. A Rhodanese domain is found at 29-137 (LREPFQVVDV…WQSVYGDDES (109 aa)).

The protein belongs to the MPI phosphatase family.

The protein localises to the cytoplasm. The protein resides in the nucleus. Protein phosphatase. This is CDC25-like phosphatase YCH1 (YCH1) from Saccharomyces cerevisiae (strain ATCC 204508 / S288c) (Baker's yeast).